We begin with the raw amino-acid sequence, 211 residues long: ATP phosphoribosyltransferase (211 aa).

It belongs to the ATP phosphoribosyltransferase family. Short subfamily. In terms of assembly, heteromultimer composed of HisG and HisZ subunits.

The protein localises to the cytoplasm. It catalyses the reaction 1-(5-phospho-beta-D-ribosyl)-ATP + diphosphate = 5-phospho-alpha-D-ribose 1-diphosphate + ATP. Its pathway is amino-acid biosynthesis; L-histidine biosynthesis; L-histidine from 5-phospho-alpha-D-ribose 1-diphosphate: step 1/9. Its function is as follows. Catalyzes the condensation of ATP and 5-phosphoribose 1-diphosphate to form N'-(5'-phosphoribosyl)-ATP (PR-ATP). Has a crucial role in the pathway because the rate of histidine biosynthesis seems to be controlled primarily by regulation of HisG enzymatic activity. In Bacillus cereus (strain AH187), this protein is ATP phosphoribosyltransferase.